Here is a 181-residue protein sequence, read N- to C-terminus: Adenylate kinase (181 aa).

10–15 (GAGKGT) lines the ATP pocket. Positions 30-59 (STGDLFRKNIGDGTPLGLEAKRYLDAGDLV) are NMP. Residues Thr-31, Arg-36, 57 to 59 (DLV), 85 to 88 (GYPR), and Gln-92 contribute to the AMP site. The tract at residues 126-132 (GRGRADD) is LID. Residue Arg-127 coordinates ATP. The AMP site is built by Arg-129 and Arg-140. Gly-166 provides a ligand contact to ATP.

Belongs to the adenylate kinase family. As to quaternary structure, monomer.

It is found in the cytoplasm. The catalysed reaction is AMP + ATP = 2 ADP. Its pathway is purine metabolism; AMP biosynthesis via salvage pathway; AMP from ADP: step 1/1. Catalyzes the reversible transfer of the terminal phosphate group between ATP and AMP. Plays an important role in cellular energy homeostasis and in adenine nucleotide metabolism. This is Adenylate kinase from Mycolicibacterium smegmatis (strain ATCC 700084 / mc(2)155) (Mycobacterium smegmatis).